The chain runs to 345 residues: Alpha-2-HS-glycoprotein (345 aa).

An N-terminal signal peptide occupies residues 1–18; sequence MKSLVLLLCFAQLWGCQS. A Cystatin fetuin-A-type 1 domain is found at 19–133; sequence APQGTGLGFR…QFRVMHTQCH (115 aa). Cystine bridges form between C32/C336, C89/C100, C114/C132, C146/C149, C208/C219, and C230/C247. N99 carries an N-linked (GlcNAc...) asparagine glycan. S134 carries the post-translational modification Phosphoserine. The residue at position 135 (T135) is a Phosphothreonine. S138 is modified (phosphoserine). In terms of domain architecture, Cystatin fetuin-A-type 2 spans 144 to 250; the sequence is KLCPRCPLLT…EEVSVACKLF (107 aa). Residues N156 and N176 are each glycosylated (N-linked (GlcNAc...) asparagine). A phosphoserine mark is found at S305, S309, S312, and S314. Positions 312 to 334 are disordered; the sequence is SASGETLHSPKVGQPGAAGPVSP.

It belongs to the fetuin family. Post-translationally, phosphorylated by FAM20C in the extracellular medium. In terms of tissue distribution, liver is the major site of synthesis, but fetuin is also expressed in limb buds and other extrahepatic tissues during development.

The protein resides in the secreted. Probably involved in differentiation. Its function is as follows. (Microbial infection) Facilitates invasion of hepatocytes by Plasmodium berghei sporozoites. The protein is Alpha-2-HS-glycoprotein (Ahsg) of Mus musculus (Mouse).